The sequence spans 1423 residues: uncharacterized protein (1423 aa).

An N-terminal signal peptide occupies residues 1 to 28 (MTSSVRLAFLATLLLLLPLEAQIQQANS). Residues 29–1321 (ANVNQNVGQQ…RSREKQNFLT (1293 aa)) lie on the Extracellular side of the membrane. 6 N-linked (GlcNAc...) asparagine glycosylation sites follow: N94, N306, N355, N483, N666, and N903. The region spanning 184-347 (SFFGQSASKA…GRYMFRVDDV (164 aa)) is the NIDO domain. Positions 638-818 (VKKKSLEMCH…FRCQMFYWRR (181 aa)) constitute an AMOP domain. Residues 1322 to 1342 (WLAIIGGIFGVLVFVILIFLC) form a helical membrane-spanning segment. The Cytoplasmic portion of the chain corresponds to 1343–1423 (CWIVKQKKKG…EDLHGLKTSV (81 aa)). The disordered stretch occupies residues 1364–1401 (SRSSMTGSRGGKKYPIHESEPLNEKRFDADTYRDDDFY). Basic and acidic residues predominate over residues 1378–1401 (PIHESEPLNEKRFDADTYRDDDFY).

Its subcellular location is the membrane. This is an uncharacterized protein from Caenorhabditis elegans.